The chain runs to 143 residues: MSHDSDDKTFPYQKDDAELRRRLTPMQYEVTQHAATERAFTGEYTDTEDAGIYKCVVCSTPLFESGAKFHSGCGWPSYFKPLNGEVIDEKVDYSHGMVRVEVRCNHCGAHLGHVFEDGPRDKTGLRYCINSAALNFESRPENE.

Residues 16–139 (DAELRRRLTP…NSAALNFESR (124 aa)) enclose the MsrB domain. Residues Cys55, Cys58, Cys104, and Cys107 each coordinate Zn(2+). The active-site Nucleophile is Cys128.

Belongs to the MsrB Met sulfoxide reductase family. Zn(2+) serves as cofactor.

It carries out the reaction L-methionyl-[protein] + [thioredoxin]-disulfide + H2O = L-methionyl-(R)-S-oxide-[protein] + [thioredoxin]-dithiol. The sequence is that of Peptide methionine sulfoxide reductase MsrB from Burkholderia orbicola (strain MC0-3).